A 429-amino-acid chain; its full sequence is 4-hydroxy-3-methylbut-2-en-1-yl diphosphate synthase (flavodoxin) (429 aa).

4 residues coordinate [4Fe-4S] cluster: cysteine 323, cysteine 326, cysteine 369, and glutamate 376.

It belongs to the IspG family. The cofactor is [4Fe-4S] cluster.

It carries out the reaction (2E)-4-hydroxy-3-methylbut-2-enyl diphosphate + oxidized [flavodoxin] + H2O + 2 H(+) = 2-C-methyl-D-erythritol 2,4-cyclic diphosphate + reduced [flavodoxin]. The protein operates within isoprenoid biosynthesis; isopentenyl diphosphate biosynthesis via DXP pathway; isopentenyl diphosphate from 1-deoxy-D-xylulose 5-phosphate: step 5/6. Functionally, converts 2C-methyl-D-erythritol 2,4-cyclodiphosphate (ME-2,4cPP) into 1-hydroxy-2-methyl-2-(E)-butenyl 4-diphosphate. In Wolbachia sp. subsp. Brugia malayi (strain TRS), this protein is 4-hydroxy-3-methylbut-2-en-1-yl diphosphate synthase (flavodoxin).